The sequence spans 95 residues: Small ubiquitin-related modifier 4 (95 aa).

The 79-residue stretch at 17–95 folds into the Ubiquitin-like domain; it reads HINLKVAGQD…VFQQPTGGVY (79 aa). A Glycyl lysine isopeptide (Gly-Lys) (interchain with K-? in acceptor proteins) cross-link involves residue Gly-93. The propeptide occupies 94–95; it reads VY.

It belongs to the ubiquitin family. SUMO subfamily. In terms of assembly, interacts with SAE2. Covalently attached to a number of proteins. Post-translationally, in contrast to SUMO1, SUMO2 and SUMO3, seems to be insensitive to sentrin-specific proteases due to the presence of Pro-90. This may impair processing to mature form and conjugation to substrates. In terms of tissue distribution, expressed mainly in adult and embryonic kidney. Expressed at various levels in immune tissues, with the highest expression in the lymph node and spleen.

Its function is as follows. Ubiquitin-like protein which can be covalently attached to target lysines as a monomer. Does not seem to be involved in protein degradation and may modulate protein subcellular localization, stability or activity. Upon oxidative stress, conjugates to various anti-oxidant enzymes, chaperones, and stress defense proteins. May also conjugate to NFKBIA, TFAP2A and FOS, negatively regulating their transcriptional activity, and to NR3C1, positively regulating its transcriptional activity. Covalent attachment to its substrates requires prior activation by the E1 complex SAE1-SAE2 and linkage to the E2 enzyme UBE2I. The protein is Small ubiquitin-related modifier 4 (SUMO4) of Homo sapiens (Human).